The primary structure comprises 1491 residues: Copper-transporting ATPase 1 (1491 aa).

At 1 to 644 (MEPSVDANSI…KREIKQWRGS (644 aa)) the chain is on the cytoplasmic side. HMA domains are found at residues 8–74 (NSIT…FDAL) and 85–151 (TNTV…LDMG). Cu(+) contacts are provided by Thr-18, Cys-19, and Cys-22. Phosphothreonine is present on Thr-152. The HMA 3 domain maps to 171–237 (VMLKMKVEGM…QIEAVGFPAF (67 aa)). Cu(+)-binding residues include Cys-182 and Cys-185. Ser-270 is modified (phosphoserine). Positions 277 to 343 (STTMFTIEGM…AIEAISPGQY (67 aa)) constitute an HMA 4 domain. Cu(+) is bound by residues Cys-288 and Cys-291. Thr-327 bears the Phosphothreonine mark. 4 positions are modified to phosphoserine: Ser-339, Ser-353, Ser-357, and Ser-362. HMA domains are found at residues 377–443 (QEAV…FDAA), 479–545 (NKCY…FGAM), and 555–621 (GILE…FEAS). Residues Cys-388, Cys-391, Cys-490, Cys-493, Cys-566, and Cys-569 each coordinate Cu(+). The helical transmembrane segment at 645 to 666 (FLVSLFFCIPVMGLMVYMMVMD) threads the bilayer. The Extracellular portion of the chain corresponds to 667–705 (HHLATLHHNQNMSNEEMINMHSAMFLERQILPGLSIMNL). Asn-677 carries an N-linked (GlcNAc...) asparagine glycan. Residues 706–725 (LSLLLCLPVQFCGGWYFYIQ) form a helical membrane-spanning segment. Topologically, residues 726–732 (AYKALKH) are cytoplasmic. Residues 733–753 (KTANMDVLIVLATTIAFAYSL) traverse the membrane as a helical segment. The Extracellular portion of the chain corresponds to 754–772 (VILLVAMFERAKVNPITFF). A helical transmembrane segment spans residues 773-793 (DTPPMLFVFIALGRWLEHIAK). At 794 to 926 (GKTSEALAKL…SKAPIQQFAD (133 aa)) the chain is on the cytoplasmic side. A helical membrane pass occupies residues 927–950 (KLSGYFVPFIVLVSIVTLLVWIII). Over 951 to 980 (GFQNFEIVETYFPGYNRSISRTETIIRFAF) the chain is Extracellular. N-linked (GlcNAc...) asparagine glycosylation occurs at Asn-966. A helical transmembrane segment spans residues 981 to 1002 (QASITVLCIACPCSLGLATPTA). The Cytoplasmic portion of the chain corresponds to 1003–1347 (VMVGTGVGAQ…LSRKTVKRIR (345 aa)). Asp-1035 functions as the 4-aspartylphosphate intermediate in the catalytic mechanism. Glu-1072 serves as a coordination point for ATP. At Thr-1203 the chain carries Phosphothreonine. Mg(2+)-binding residues include Asp-1292 and Asp-1296. A helical transmembrane segment spans residues 1348-1365 (INFVFALIYNLVGIPIAA). Residues 1366–1376 (GVFLPIGLVLQ) lie on the Extracellular side of the membrane. The helical transmembrane segment at 1377–1396 (PWMGSAAMAASSVSVVLSSL) threads the bilayer. Residues 1397–1491 (FLKLYRKPTY…DFREDDDTTL (95 aa)) are Cytoplasmic-facing. 5 positions are modified to phosphoserine: Ser-1421, Ser-1423, Ser-1451, Ser-1454, and Ser-1457. Positions 1458–1459 (LL) match the Endocytosis signal motif. Residues Ser-1460, Ser-1464, Ser-1467, and Ser-1477 each carry the phosphoserine modification. Positions 1477–1491 (SLLVGDFREDDDTTL) are PDZD11-binding. Positions 1478–1479 (LL) match the Endocytosis signal motif.

It belongs to the cation transport ATPase (P-type) (TC 3.A.3) family. Type IB subfamily. As to quaternary structure, monomer. Interacts with PDZD11. Interacts with ATOX1 and COMMD1. Interacts with TYRP1. Directly interacts with SOD3; this interaction is copper-dependent and is required for SOD3 activity. As to expression, widely expressed. Highly expressed in pituitary endocrine cells. Expressed in melanocytes (at protein level). Expressed in motor neuron (at protein level). Expressed in hippocampal neuron (at protein level). In the kidney, it is detected in the proximal and distal tubules (at protein level). Expressed in aorta (at protein level).

It is found in the golgi apparatus. The protein resides in the trans-Golgi network membrane. The protein localises to the cell membrane. It localises to the melanosome membrane. Its subcellular location is the early endosome membrane. It is found in the cell projection. The protein resides in the axon. The protein localises to the dendrite. It localises to the postsynaptic density. The enzyme catalyses Cu(+)(in) + ATP + H2O = Cu(+)(out) + ADP + phosphate + H(+). Functionally, ATP-driven copper (Cu(+)) ion pump that plays an important role in intracellular copper ion homeostasis. Within a catalytic cycle, acquires Cu(+) ion from donor protein on the cytoplasmic side of the membrane and delivers it to acceptor protein on the lumenal side. The transfer of Cu(+) ion across the membrane is coupled to ATP hydrolysis and is associated with a transient phosphorylation that shifts the pump conformation from inward-facing to outward-facing state. Under physiological conditions, at low cytosolic copper concentration, it is localized at the trans-Golgi network (TGN) where it transfers Cu(+) ions to cuproenzymes of the secretory pathway. Upon elevated cytosolic copper concentrations, it relocalizes to the plasma membrane where it is responsible for the export of excess Cu(+) ions. May play a dual role in neuron function and survival by regulating cooper efflux and neuronal transmission at the synapse as well as by supplying Cu(+) ions to enzymes such as PAM, TYR and SOD3. In the melanosomes of pigmented cells, provides copper cofactor to TYR to form an active TYR holoenzyme for melanin biosynthesis. This is Copper-transporting ATPase 1 from Mus musculus (Mouse).